Here is a 308-residue protein sequence, read N- to C-terminus: Putative mitochondrial transporter UCP3 (308 aa).

At 1-10 the chain is on the mitochondrial intermembrane side; sequence MVGLKPPEVP. The chain crosses the membrane as a helical span at residues 11–32; it reads PTTAVKLLGAGTAACFADLLTF. 3 Solcar repeats span residues 11–102, 111–202, and 211–296; these read PTTA…VKQL, SSIT…IKEK, and DNLP…LKRA. At 33–73 the chain is on the mitochondrial matrix side; sequence PLDTAKVRLQIQGENQAARSAQYRGVLGTILTMVRNEGPRS. A helical membrane pass occupies residues 74–96; that stretch reads PYNGLVAGLQRQMSFASIRIGLY. Topologically, residues 97 to 116 are mitochondrial intermembrane; it reads DSVKQLYTPKGSDHSSITTR. Residues 117 to 133 traverse the membrane as a helical segment; that stretch reads ILAGCTTGAMAVTCAQP. Residues 134–179 are Mitochondrial matrix-facing; the sequence is TDVVKVRFQASIHAGPRSNRKYSGTMDAYRTIAREEGVRGLWKGIL. The helical transmembrane segment at 180 to 196 threads the bilayer; that stretch reads PNITRNAIVNCAEMVTY. The Mitochondrial intermembrane segment spans residues 197–213; it reads DVIKEKVLDYHLLTDNL. A helical transmembrane segment spans residues 214–233; the sequence is PCHFVSAFGAGFCATVVASP. Topologically, residues 234–267 are mitochondrial matrix; sequence VDVVKTRYMNSPPGQYQNPLDCMLKMVTQEGPTA. Residues 268–290 traverse the membrane as a helical segment; that stretch reads FYKGFTPSFLRLGSWNVVMFVSY. The segment at 275–297 is purine nucleotide binding; it reads SFLRLGSWNVVMFVSYEQLKRAL. Topologically, residues 291 to 308 are mitochondrial intermembrane; sequence EQLKRALMKVQMLRESPF.

This sequence belongs to the mitochondrial carrier (TC 2.A.29) family. Interacts with HAX1; the interaction is direct and calcium-dependent.

The protein resides in the mitochondrion inner membrane. Putative transmembrane transporter that plays a role in mitochondrial metabolism via an as yet unclear mechanism. Originally, this mitochondrial protein was thought to act as a proton transmembrane transporter from the mitochondrial intermembrane space into the matrix, causing proton leaks through the inner mitochondrial membrane, thereby uncoupling mitochondrial membrane potential generation from ATP synthesis. However, this function is controversial and uncoupling may not be the function, or at least not the main function, but rather a consequence of more conventional metabolite transporter activity. The sequence is that of Putative mitochondrial transporter UCP3 from Sus scrofa (Pig).